We begin with the raw amino-acid sequence, 462 residues long: CCA-adding enzyme (462 aa).

Residues S54 and R57 each contribute to the ATP site. S54 and R57 together coordinate CTP. Mg(2+)-binding residues include D66, D68, and D117. ATP is bound by residues H140, K160, and Y169. Positions 140, 160, and 169 each coordinate CTP.

The protein belongs to the tRNA nucleotidyltransferase/poly(A) polymerase family. Archaeal CCA-adding enzyme subfamily. In terms of assembly, homodimer. Mg(2+) is required as a cofactor.

It catalyses the reaction a tRNA precursor + 2 CTP + ATP = a tRNA with a 3' CCA end + 3 diphosphate. The catalysed reaction is a tRNA with a 3' CCA end + 2 CTP + ATP = a tRNA with a 3' CCACCA end + 3 diphosphate. Its function is as follows. Catalyzes the addition and repair of the essential 3'-terminal CCA sequence in tRNAs without using a nucleic acid template. Adds these three nucleotides in the order of C, C, and A to the tRNA nucleotide-73, using CTP and ATP as substrates and producing inorganic pyrophosphate. tRNA 3'-terminal CCA addition is required both for tRNA processing and repair. Also involved in tRNA surveillance by mediating tandem CCA addition to generate a CCACCA at the 3' terminus of unstable tRNAs. While stable tRNAs receive only 3'-terminal CCA, unstable tRNAs are marked with CCACCA and rapidly degraded. This Halorubrum lacusprofundi (strain ATCC 49239 / DSM 5036 / JCM 8891 / ACAM 34) protein is CCA-adding enzyme.